The following is an 814-amino-acid chain: Protein kintoun (814 aa).

The segment covering 234-246 (AANTARSPASPAP) has biased composition (low complexity). Disordered regions lie at residues 234–259 (AANT…EPRC) and 357–490 (ARQE…MGDP). A compositionally biased stretch (basic and acidic residues) spans 388–404 (AAREESADGTGADHGEK). Phosphoserine is present on residues Ser-444 and Ser-618. A disordered region spans residues 654–686 (AGLQGKGKGVREGCPLSEAEAADQSATSPAASD). Low complexity predominate over residues 675-686 (ADQSATSPAASD).

Belongs to the PIH1 family. Kintoun subfamily. As to quaternary structure, interacts with DNAI2 and HSPA1A. Interacts with CFAP300. Interacts with DNAAF4. Interacts with DNAAF6/PIH1D3. In terms of tissue distribution, expressed in nearly all organs of adult, with higher expression in tissues known to have motile cilia and flagella, such as brain and testis.

It localises to the cytoplasm. Its subcellular location is the dynein axonemal particle. Required for cytoplasmic pre-assembly of axonemal dyneins, thereby playing a central role in motility in cilia and flagella. Involved in pre-assembly of dynein arm complexes in the cytoplasm before intraflagellar transport loads them for the ciliary compartment. This Mus musculus (Mouse) protein is Protein kintoun.